The primary structure comprises 384 residues: S-adenosylmethionine synthase (384 aa).

H15 is an ATP binding site. Residue D17 participates in Mg(2+) binding. E43 is a K(+) binding site. L-methionine is bound by residues E56 and Q99. Residues 99–109 are flexible loop; the sequence is QSPDINQGVDR. Residues 164–166, 231–232, D240, 246–247, A263, and K267 contribute to the ATP site; these read DAK, RF, and RK. Position 240 (D240) interacts with L-methionine. K271 provides a ligand contact to L-methionine.

Belongs to the AdoMet synthase family. As to quaternary structure, homotetramer; dimer of dimers. Mg(2+) is required as a cofactor. K(+) serves as cofactor.

The protein localises to the cytoplasm. It carries out the reaction L-methionine + ATP + H2O = S-adenosyl-L-methionine + phosphate + diphosphate. It functions in the pathway amino-acid biosynthesis; S-adenosyl-L-methionine biosynthesis; S-adenosyl-L-methionine from L-methionine: step 1/1. Catalyzes the formation of S-adenosylmethionine (AdoMet) from methionine and ATP. The overall synthetic reaction is composed of two sequential steps, AdoMet formation and the subsequent tripolyphosphate hydrolysis which occurs prior to release of AdoMet from the enzyme. This is S-adenosylmethionine synthase from Shewanella halifaxensis (strain HAW-EB4).